We begin with the raw amino-acid sequence, 200 residues long: Imidazoleglycerol-phosphate dehydratase (200 aa).

It belongs to the imidazoleglycerol-phosphate dehydratase family.

The protein localises to the cytoplasm. It carries out the reaction D-erythro-1-(imidazol-4-yl)glycerol 3-phosphate = 3-(imidazol-4-yl)-2-oxopropyl phosphate + H2O. Its pathway is amino-acid biosynthesis; L-histidine biosynthesis; L-histidine from 5-phospho-alpha-D-ribose 1-diphosphate: step 6/9. This is Imidazoleglycerol-phosphate dehydratase from Chlorobium phaeovibrioides (strain DSM 265 / 1930) (Prosthecochloris vibrioformis (strain DSM 265)).